An 86-amino-acid chain; its full sequence is Small ribosomal subunit protein bS20 (86 aa).

It belongs to the bacterial ribosomal protein bS20 family.

Binds directly to 16S ribosomal RNA. The polypeptide is Small ribosomal subunit protein bS20 (Bifidobacterium longum (strain DJO10A)).